An 896-amino-acid chain; its full sequence is Rho GTPase-activating protein gacM (896 aa).

The interval 1–97 (MSSFIGWKKN…SSNDTIGKSS (97 aa)) is disordered. Residues 10-26 (NSNSGGTPGASPTSSSP) are compositionally biased toward low complexity. Polar residues predominate over residues 27 to 38 (LNSTISNANSVS). 2 stretches are compositionally biased toward low complexity: residues 45 to 57 (SISN…LSSS) and 65 to 97 (NSNN…GKSS). In terms of domain architecture, Rho-GAP spans 139 to 330 (QPINPNTEFG…LWIEEFDMIS (192 aa)). Composition is skewed to low complexity over residues 375 to 391 (IQQQ…QSHP), 400 to 427 (SSLS…LLPT), 448 to 460 (PTPT…TPQT), and 473 to 506 (NNNS…NNNN). 2 disordered regions span residues 375–514 (IQQQ…GSPL) and 701–770 (LPTG…ENQI). Polar residues predominate over residues 702–711 (PTGSSWSDFE). Composition is skewed to low complexity over residues 712 to 743 (NNSS…NSSP) and 751 to 761 (SNGLNSSSNSN).

Its subcellular location is the cytoplasm. Functionally, rho GTPase-activating protein involved in the signal transduction pathway. The protein is Rho GTPase-activating protein gacM (gacM) of Dictyostelium discoideum (Social amoeba).